A 476-amino-acid chain; its full sequence is Serine/threonine-protein kinase Chk1 (476 aa).

Residues 1 to 265 (MAVPFVEDWD…IPDIKKDRWY (265 aa)) are interaction with CLSPN. Residues 9-265 (WDLVQTLGEG…IPDIKKDRWY (257 aa)) form the Protein kinase domain. Residues 15–23 (LGEGAYGEV) and Lys38 each bind ATP. Asp130 functions as the Proton acceptor in the catalytic mechanism. Residue Lys132 forms a Glycyl lysine isopeptide (Lys-Gly) (interchain with G-Cter in ubiquitin) linkage. Positions 267–331 (KPLNRGAKRP…RTGLSLWDTG (65 aa)) are disordered. A Phosphoserine; by PKB/AKT1 modification is found at Ser280. Over residues 280–291 (SGGMSESSSGFS) the composition is skewed to low complexity. Residues Ser286, Ser296, and Ser301 each carry the phosphoserine modification. The segment covering 298-320 (LDFSPVNNGSSEETVKFSSSQPE) has biased composition (polar residues). At Ser317 the chain carries Phosphoserine; by ATM and ATR. The residue at position 345 (Ser345) is a Phosphoserine; by ATR. Residues 391–476 (QCLKETFEKL…SSQKVWFPVT (86 aa)) form an autoinhibitory region region. Lys436 participates in a covalent cross-link: Glycyl lysine isopeptide (Lys-Gly) (interchain with G-Cter in ubiquitin). Ser463, Ser467, and Ser468 each carry phosphoserine.

The protein belongs to the protein kinase superfamily. CAMK Ser/Thr protein kinase family. NIM1 subfamily. Interacts (phosphorylated by ATR) with RAD51. Interacts with and phosphorylates CLSPN, an adapter protein that regulates the ATR-dependent phosphorylation of CHEK1. Interacts with BRCA1. Interacts with and phosphorylates CDC25A, CDC25B and CDC25C. Interacts with FBXO6, which regulates CHEK1. Interacts with PPM1D, which regulates CHEK1 through dephosphorylation. Interacts with TIMELESS; DNA damage-dependent. Interacts with FEM1B; activates CHEK1 in response to stress. Interacts with TLK1. Interacts with XPO1 and YWHAZ. Interacts with CDK5RAP3; antagonizes CHEK1. In terms of processing, phosphorylated by ATR in a RAD17-dependent manner in response to ultraviolet irradiation and inhibition of DNA replication. Phosphorylated by ATM in response to ionizing irradiation. ATM and ATR can both phosphorylate Ser-317 and Ser-345 and this results in enhanced kinase activity. Phosphorylation at Ser-345 induces a change in the conformation of the protein, activates the kinase activity and is a prerequisite for interaction with FBXO6 and subsequent ubiquitination at Lys-436. Phosphorylation at Ser-345 also increases binding to 14-3-3 proteins and promotes nuclear retention. Conversely, dephosphorylation at Ser-345 by PPM1D may contribute to exit from checkpoint mediated cell cycle arrest. Phosphorylation at Ser-280 by AKT1/PKB, may promote mono and/or diubiquitination. Also phosphorylated at undefined residues during mitotic arrest, resulting in decreased activity. Post-translationally, ubiquitinated. Mono or diubiquitination promotes nuclear exclusion. The activated form (phosphorylated on Ser-345) is polyubiquitinated at Lys-436 by some SCF-type E3 ubiquitin ligase complex containing FBXO6 promoting its degradation. Ubiquitination and degradation are required to terminate the checkpoint and ensure that activated CHEK1 does not accumulate as cells progress through S phase, when replication forks encounter transient impediments during normal DNA replication. 'Lys-63'-mediated ubiquitination by TRAF4 at Lys-132 activates cell cycle arrest and activation of DNA repair. Proteolytically cleaved at the C-terminus by SPRTN during normal DNA replication, thereby promoting CHEK1 removal from chromatin and activating the protein kinase activity. In terms of tissue distribution, found in all adult tissues tested. Elevated expression in testis, lung and spleen. 15.5 day old embryos show ubiquitous expression with strong expression in brain, liver, kidney, pancreas, intestine, thymus and lung.

The protein localises to the nucleus. It localises to the chromosome. It is found in the cytoplasm. The protein resides in the cytoskeleton. Its subcellular location is the microtubule organizing center. The protein localises to the centrosome. The catalysed reaction is L-seryl-[protein] + ATP = O-phospho-L-seryl-[protein] + ADP + H(+). The enzyme catalyses L-threonyl-[protein] + ATP = O-phospho-L-threonyl-[protein] + ADP + H(+). Its activity is regulated as follows. Activated through phosphorylation predominantly by ATR but also by ATM in response to DNA damage or inhibition of DNA replication. Activation is modulated by several mediators including CLSPN, BRCA1 and FEM1B. Proteolytic cleavage at the C-terminus by SPRTN during normal DNA replication activates the protein kinase activity. Its function is as follows. Serine/threonine-protein kinase which is required for checkpoint-mediated cell cycle arrest and activation of DNA repair in response to the presence of DNA damage or unreplicated DNA. May also negatively regulate cell cycle progression during unperturbed cell cycles. This regulation is achieved by a number of mechanisms that together help to preserve the integrity of the genome. Recognizes the substrate consensus sequence [R-X-X-S/T]. Binds to and phosphorylates CDC25A, CDC25B and CDC25C. Phosphorylation of CDC25A at 'Ser-178' and 'Thr-507' and phosphorylation of CDC25C at 'Ser-216' creates binding sites for 14-3-3 proteins which inhibit CDC25A and CDC25C. Phosphorylation of CDC25A at 'Ser-76', 'Ser-124', 'Ser-178', 'Ser-279' and 'Ser-293' promotes proteolysis of CDC25A. Phosphorylation of CDC25A at 'Ser-76' primes the protein for subsequent phosphorylation at 'Ser-79', 'Ser-82' and 'Ser-88' by NEK11, which is required for polyubiquitination and degradation of CDCD25A. Inhibition of CDC25 leads to increased inhibitory tyrosine phosphorylation of CDK-cyclin complexes and blocks cell cycle progression. Also phosphorylates NEK6. Binds to and phosphorylates RAD51 at 'Thr-309', which promotes the release of RAD51 from BRCA2 and enhances the association of RAD51 with chromatin, thereby promoting DNA repair by homologous recombination. Phosphorylates multiple sites within the C-terminus of TP53, which promotes activation of TP53 by acetylation and promotes cell cycle arrest and suppression of cellular proliferation. Also promotes repair of DNA cross-links through phosphorylation of FANCE. Binds to and phosphorylates TLK1 at 'Ser-743', which prevents the TLK1-dependent phosphorylation of the chromatin assembly factor ASF1A. This may enhance chromatin assembly both in the presence or absence of DNA damage. May also play a role in replication fork maintenance through regulation of PCNA. May regulate the transcription of genes that regulate cell-cycle progression through the phosphorylation of histones. Phosphorylates histone H3.1 (to form H3T11ph), which leads to epigenetic inhibition of a subset of genes. May also phosphorylate RB1 to promote its interaction with the E2F family of transcription factors and subsequent cell cycle arrest. Phosphorylates SPRTN, promoting SPRTN recruitment to chromatin. Reduces replication stress and activates the G2/M checkpoint, by phosphorylating and inactivating PABIR1/FAM122A and promoting the serine/threonine-protein phosphatase 2A-mediated dephosphorylation and stabilization of WEE1 levels and activity. The chain is Serine/threonine-protein kinase Chk1 (Chek1) from Mus musculus (Mouse).